The sequence spans 362 residues: Hepatic sodium/bile acid cotransporter (362 aa).

The Extracellular portion of the chain corresponds to 1–22 (MEVHNVSAPFNFSLPPGFGHRA). 2 N-linked (GlcNAc...) asparagine glycosylation sites follow: N5 and N11. Residues 23 to 44 (TDKALSIILVLMLLLIMLSLGC) form a helical membrane-spanning segment. The Cytoplasmic segment spans residues 45 to 47 (TME). A helical transmembrane segment spans residues 48–83 (FSKIKAHLWKPKGVIVALVAQFGIMPLAAFLLGKIF). Residues 84–86 (HLS) lie on the Extracellular side of the membrane. A discontinuously helical membrane pass occupies residues 87–112 (NIEALAILICGCSPGGNLSNLFTLAM). Over 113 to 115 (KGD) the chain is Cytoplasmic. The chain crosses the membrane as a helical span at residues 116-142 (MNLSIVMTTCSSFSALGMMPLLLYVYS). Residues 143–156 (KGIYDGDLKDKVPY) are Extracellular-facing. The chain crosses the membrane as a helical span at residues 157-179 (KGIMISLVIVLIPCTIGIVLKSK). Topologically, residues 180–183 (RPHY) are cytoplasmic. A helical membrane pass occupies residues 184–217 (VPYILKGGMIITFLLSVAVTALSVINVGNSIMFV). Residues 218–219 (MT) lie on the Extracellular side of the membrane. Residues 220 to 243 (PHLLATSSLMPFSGFLMGYILSAL) traverse the membrane as a helical segment. Residues 244–247 (FQLN) lie on the Cytoplasmic side of the membrane. A discontinuously helical membrane pass occupies residues 248–273 (PSCRRTISMETGFQNIQLCSTILNVT). Residues 274–280 (FPPEVIG) lie on the Extracellular side of the membrane. The helical transmembrane segment at 281 to 311 (PLFFFPLLYMIFQLAEGLLIIIIFRCYEKIK) threads the bilayer. Residues 312 to 362 (PPKDQTKITYKAAATEDATPAALEKGTHNGNIPPLQPGPSPNGLNSGQMAN) lie on the Cytoplasmic side of the membrane. Residue T330 is modified to Phosphothreonine. Positions 333–362 (ALEKGTHNGNIPPLQPGPSPNGLNSGQMAN) are disordered. Polar residues predominate over residues 353–362 (NGLNSGQMAN).

It belongs to the bile acid:sodium symporter (BASS) (TC 2.A.28) family. As to expression, highly expressed in liver and low expression in kidney.

The protein localises to the cell membrane. The catalysed reaction is taurocholate(out) + 2 Na(+)(out) = taurocholate(in) + 2 Na(+)(in). The enzyme catalyses taurochenodeoxycholate(out) + 2 Na(+)(out) = taurochenodeoxycholate(in) + 2 Na(+)(in). It catalyses the reaction tauroursodeoxycholate(out) + 2 Na(+)(out) = tauroursodeoxycholate(in) + 2 Na(+)(in). It carries out the reaction glycocholate(out) + 2 Na(+)(out) = glycocholate(in) + 2 Na(+)(in). The catalysed reaction is estrone 3-sulfate(out) + 2 Na(+)(out) = estrone 3-sulfate(in) + 2 Na(+)(in). The enzyme catalyses cholate(out) + 2 Na(+)(out) = cholate(in) + 2 Na(+)(in). It catalyses the reaction tauronorcholate(out) + 2 Na(+)(out) = tauronorcholate(in) + 2 Na(+)(in). It carries out the reaction taurodeoxycholate(out) + 2 Na(+)(out) = taurodeoxycholate(in) + 2 Na(+)(in). The catalysed reaction is tauroallocholate(out) + 2 Na(+)(out) = tauroallocholate(in) + 2 Na(+)(in). The enzyme catalyses taurohyodeoxycholate(out) + 2 Na(+)(out) = taurohyodeoxycholate(in) + 2 Na(+)(in). It catalyses the reaction taurohyocholate(out) + 2 Na(+)(out) = taurohyocholate(in) + 2 Na(+)(in). It carries out the reaction tauro-beta-muricholate(out) + 2 Na(+)(out) = tauro-beta-muricholate(in) + 2 Na(+)(in). Its activity is regulated as follows. The transport of bile acids is sodium-dependent. In terms of biological role, as a major transporter of conjugated bile salts from plasma into the hepatocyte, it plays a key role in the enterohepatic circulation of bile salts necessary for the solubilization and absorption of dietary fat and fat-soluble vitamins. It is strictly dependent on the extracellular presence of sodium. It exhibits broad substrate specificity and transports various bile acids, such as taurocholate, cholate, as well as non-bile acid organic compounds, such as estrone sulfate. Works collaboratively with the ileal transporter (NTCP2), the organic solute transporter (OST), and the bile salt export pump (BSEP), to ensure efficacious biological recycling of bile acids during enterohepatic circulation. This Rattus norvegicus (Rat) protein is Hepatic sodium/bile acid cotransporter (Slc10a1).